A 128-amino-acid polypeptide reads, in one-letter code: uncharacterized protein (128 aa).

This is an uncharacterized protein from Mycoplasma genitalium (strain ATCC 33530 / DSM 19775 / NCTC 10195 / G37) (Mycoplasmoides genitalium).